Here is a 377-residue protein sequence, read N- to C-terminus: Signal peptide peptidase (377 aa).

The segment at 1-27 (MDSALSDPHNGSAEAGGPTNSTTRPPS) is disordered. At 1–31 (MDSALSDPHNGSAEAGGPTNSTTRPPSTPEG) the chain is on the lumenal side. Residues Asn-10 and Asn-20 are each glycosylated (N-linked (GlcNAc...) asparagine). A helical transmembrane segment spans residues 32–52 (IALAYGSLLLMALLPIFFGAL). Over 53 to 77 (RSVRCARGKNASDMPETITSRDAAR) the chain is Cytoplasmic. The chain crosses the membrane as a helical span at residues 78–98 (FPIIASCTLLGLYLFFKIFSQ). The Lumenal segment spans residues 99–100 (EY). The chain crosses the membrane as a helical span at residues 101-121 (INLLLSMYFFVLGILALSHTI). At 122-157 (SPFMNKFFPASFPNRQYQLLFTQGSGENKEEIINYE) the chain is on the cytoplasmic side. The chain crosses the membrane as a helical span at residues 158–178 (FDTKDLVCLGLSSIVGVWYLL). Topologically, residues 179–181 (RKH) are lumenal. A helical transmembrane segment spans residues 182–202 (WIANNLFGLAFSLNGVELLHL). At 203 to 209 (NNVSTGC) the chain is on the cytoplasmic side. Residues 210–230 (ILLGGLFIYDVFWVFGTNVMV) traverse the membrane as a helical segment. The active site involves Asp-219. Topologically, residues 231–256 (TVAKSFEAPIKLVFPQDLLEKGLEAN) are lumenal. Residues 257 to 277 (NFAMLGLGDVVIPGIFIALLL) form a helical membrane-spanning segment. Asp-265 is an active-site residue. Residues 278–290 (RFDISLKKNTHTY) are Cytoplasmic-facing. Residues 291-311 (FYTSFAAYIFGLGLTIFIMHI) traverse the membrane as a helical segment. Topologically, residues 312-314 (FKH) are lumenal. Residues 315–335 (AQPALLYLVPACIGFPVLVAL) traverse the membrane as a helical segment. The PAL signature appears at 317–319 (PAL). The Cytoplasmic segment spans residues 336–377 (AKGEVTEMFSYEESNPKDPAAVTESKEGTEASASKGLEKKEK). The tract at residues 345–377 (SYEESNPKDPAAVTESKEGTEASASKGLEKKEK) is disordered. At Ser-367 the chain carries Phosphoserine.

It belongs to the peptidase A22B family. In terms of assembly, monomer. Homodimer. Interacts with RNF139. Interacts with DERL1 and XBP1 isoform 1. In terms of processing, N-glycosylated. In terms of tissue distribution, widely expressed with highest levels in kidney, liver, placenta, lung, leukocytes and small intestine and reduced expression in heart and skeletal muscle. Expressed abundantly in the CNS with highest levels in thalamus and medulla.

The protein localises to the endoplasmic reticulum membrane. It is found in the membrane. It localises to the cell membrane. Its function is as follows. Catalyzes intramembrane proteolysis of signal peptides that have been removed from precursors of secretory and membrane proteins, resulting in the release of the fragment from the ER membrane into the cytoplasm. Required to generate lymphocyte cell surface (HLA-E) epitopes derived from MHC class I signal peptides. May be necessary for the removal of the signal peptide that remains attached to the hepatitis C virus core protein after the initial proteolytic processing of the polyprotein. Involved in the intramembrane cleavage of the integral membrane protein PSEN1. Cleaves the integral membrane protein XBP1 isoform 1 in a DERL1/RNF139-dependent manner. May play a role in graft rejection. The protein is Signal peptide peptidase of Homo sapiens (Human).